A 728-amino-acid polypeptide reads, in one-letter code: Ribosome biogenesis protein bop1-A (728 aa).

The interval 1–114 is disordered; the sequence is MKRGSQGEAG…ENDSSDEEDI (114 aa). A compositionally biased stretch (acidic residues) spans 55-67; that stretch reads SDDEEDHWSEEEE. The span at 68–77 shows a compositional bias: basic and acidic residues; that stretch reads NPGKSPKEII. WD repeat units follow at residues 393–432, 434–474, 514–556, 559–597, 600–639, 643–682, and 698–728; these read GHKDLVRCISVSPSGQWLVSGSDDCSVRFWEVSTGRCMKS, VLEG…RLLC, KHQK…SQNP, KNKGQVQKVLFHPTRPFFFVATQRYVRVYNLLKQELTKK, TNCKWVSSIAVHPAGDNLICGSYDSKLAWFDMDLSTKPYK, HHKKALRAVSFHKSYPLFASGSDDGSVIVCHGMVYNDLLQ, and HRDLGVLDVTFHPTQPWVFSSGADATIRLFT.

The protein belongs to the WD repeat BOP1/ERB1 family. Component of the PeBoW complex, composed of bop1, pes1 and wdr12. The complex is held together by bop1, which interacts with pes1 via its N-terminal domain and with wdr12 via a high-affinity interaction between the seven-bladed beta-propeller domains of the 2 proteins. The PeBoW complex associates with the 66S pre-ribosome.

It localises to the nucleus. It is found in the nucleolus. The protein localises to the nucleoplasm. Functionally, component of the PeBoW complex, which is required for maturation of 28S and 5.8S ribosomal RNAs and formation of the 60S ribosome. The polypeptide is Ribosome biogenesis protein bop1-A (bop1-a) (Xenopus laevis (African clawed frog)).